The chain runs to 295 residues: MSVSESHDIQLVIITGMSGAGKTVAIQSFEDLGYFCVDNLPPSLLPKFLELMKESNSKMSKVALVMDLRGREFFDRLIEALDEMAENPWITPRILFLDAKDSILVTRYKETRRSHPLAATGLPLEGIALERELLEELKGRSQIIYDTSDMKPRDLREKIVKHFATNQGETFTVNVMSFGFKYGIPIDADLVFDVRFLPNPYYIESMRPLTGKDKEVSSYVMKWNETQKFNEKLIDLLSFMLPSYKREGKSQVVIAIGCTGGQHRSVTLAENLADYFKKDYYTHVTHRDIEKRSRK.

16–23 provides a ligand contact to ATP; it reads GMSGAGKT. 67–70 contributes to the GTP binding site; sequence DLRG.

The protein belongs to the RapZ-like family.

In terms of biological role, displays ATPase and GTPase activities. Can also hydrolyze pNPP. May affect the expression of competence via the phosphorylation of a cellular component. The sequence is that of Nucleotide-binding protein YvcJ (yvcJ) from Bacillus subtilis (strain 168).